Consider the following 503-residue polypeptide: ATP synthase subunit alpha (503 aa).

Residue 169–176 (GDRKTGKT) coordinates ATP.

This sequence belongs to the ATPase alpha/beta chains family. As to quaternary structure, F-type ATPases have 2 components, CF(1) - the catalytic core - and CF(0) - the membrane proton channel. CF(1) has five subunits: alpha(3), beta(3), gamma(1), delta(1), epsilon(1). CF(0) has three main subunits: a(1), b(2) and c(9-12). The alpha and beta chains form an alternating ring which encloses part of the gamma chain. CF(1) is attached to CF(0) by a central stalk formed by the gamma and epsilon chains, while a peripheral stalk is formed by the delta and b chains.

It localises to the cell membrane. It catalyses the reaction ATP + H2O + 4 H(+)(in) = ADP + phosphate + 5 H(+)(out). Its function is as follows. Produces ATP from ADP in the presence of a proton gradient across the membrane. The alpha chain is a regulatory subunit. The polypeptide is ATP synthase subunit alpha (Lactobacillus johnsonii (strain CNCM I-12250 / La1 / NCC 533)).